The chain runs to 312 residues: Transcription factor Ouib (312 aa).

In terms of domain architecture, ZAD spans 4 to 79 (IVCRVCGRQK…IKTQTKWLTI (76 aa)). The Zn(2+) site is built by C6, C9, C52, and C55. C2H2-type zinc fingers lie at residues 167–189 (YICELCGTHATSKPTFQRHMRKH), 195–217 (FGCKDCDARFLSAGELRAHHRVH), 223–245 (FACRFCEKRYVSYMGRLIHERTH), 251–273 (YVCEECGKKFTTAYVLKNHMVIH), and 279–303 (FRCDICDRSFQRKAHLVTHTRSMMH).

Expressed predominantly in the prothoracic gland during embryonic and larval development.

It is found in the nucleus. Its function is as follows. Transcription factor required for ecdysteroid production in the prothoracic gland by activating transcription of the ecdysteroid biosynthesis gene spok. Binds to the 5'-AGCTTTATTATTTAG-3' DNA sequence in the spok enhancer region. This is Transcription factor Ouib from Drosophila melanogaster (Fruit fly).